Reading from the N-terminus, the 406-residue chain is Probable G-protein coupled receptor tkr-1 (406 aa).

Residues 1–47 (MNQEFLIQLGERACKNAENLTLPAELEGIFFCAPSSRESLATQVFVA) lie on the Extracellular side of the membrane. Residues 48–68 (IAFVLLMATAIIGNSVVMWII) form a helical membrane-spanning segment. Residues 69 to 76 (YQHKVMHY) are Cytoplasmic-facing. Residues 77–97 (GFNYFLFNMAFADLLIALFNV) traverse the membrane as a helical segment. Over 98-115 (GTSWTYNLYYDWWYGDLC) the chain is Extracellular. A helical membrane pass occupies residues 116 to 136 (TLTSFFGIAPTTVSVCSMMAL). At 137 to 158 (SWDRCQAVVNPLQKRPLSRKRS) the chain is on the cytoplasmic side. The helical transmembrane segment at 159-179 (VIAILIIWVVSTVTALPFAIA) threads the bilayer. The Extracellular portion of the chain corresponds to 180 to 204 (ASVNSLYTYDVVTSTVSKAHVCSAP). A helical transmembrane segment spans residues 205 to 225 (VNTFFEKVLFGIQYALPIIIL). The Cytoplasmic portion of the chain corresponds to 226–261 (GSTFTRIAVAFRATNEATDSSLKNNHTRAKSKAVKM). Residues 262 to 282 (LFLMVVAFVVCWLPYHIYHAF) form a helical membrane-spanning segment. Residues 283-297 (ALEEFFDAARGKYAY) lie on the Extracellular side of the membrane. A helical membrane pass occupies residues 298 to 318 (LLIYWIAMSSCAYNPIIYCFA). Topologically, residues 319 to 406 (NERFRIGFRY…KVHLLSCHER (88 aa)) are cytoplasmic.

This sequence belongs to the G-protein coupled receptor 1 family.

The protein resides in the cell membrane. Not known. Putative receptor. This chain is Probable G-protein coupled receptor tkr-1 (tkr-1), found in Caenorhabditis elegans.